The primary structure comprises 328 residues: MLNEFPIFDYEDIQLIPNKCVIKSRAEADTSVTLGNHTFKLPVVPANMQTILDENVAEQLAKGGYFYIMHRFDEVGRIPFIKRMHDQGLIASISVGVKDYEYDFVSQLKADAPEYITIDIAHGHADSVISMIQHIKKELPDTFVIAGNVGTPEAVRELENAGADATKVGIGPGKVCITKVKTGFGTGGWQLAALRWCAKVARKPIIADGGIRTHGDIAKSIRFGASMIMIGSLFAGHIESPGKTIEVDGEQFKEYYGSASQYQKGAYKNVEGKRILLPAKGHLQDTLTEMEQDLQSAISYAGGRQVADLKHVDYVIVKNSIWNGDASH.

The active-site Thioimidate intermediate is cysteine 176. Residue 205 to 228 (IIADGGIRTHGDIAKSIRFGASMI) participates in NADP(+) binding.

Belongs to the IMPDH/GMPR family. GuaC type 2 subfamily.

The enzyme catalyses IMP + NH4(+) + NADP(+) = GMP + NADPH + 2 H(+). Functionally, catalyzes the irreversible NADPH-dependent deamination of GMP to IMP. It functions in the conversion of nucleobase, nucleoside and nucleotide derivatives of G to A nucleotides, and in maintaining the intracellular balance of A and G nucleotides. The protein is GMP reductase of Streptococcus pneumoniae (strain CGSP14).